Here is a 137-residue protein sequence, read N- to C-terminus: Small ribosomal subunit protein uS12 (137 aa).

A disordered region spans residues 1 to 55; sequence MPTINQLVRKPRQSKIKKSDSPALNKGFNSKKKKFTDLNSPQKRGVCTRVGTMTP. Asp-102 carries the 3-methylthioaspartic acid modification. The disordered stretch occupies residues 118-137; the sequence is SGVDGRRQGRSLYGTKKPKN.

This sequence belongs to the universal ribosomal protein uS12 family. As to quaternary structure, part of the 30S ribosomal subunit. Contacts proteins S8 and S17. May interact with IF1 in the 30S initiation complex.

Functionally, with S4 and S5 plays an important role in translational accuracy. Its function is as follows. Interacts with and stabilizes bases of the 16S rRNA that are involved in tRNA selection in the A site and with the mRNA backbone. Located at the interface of the 30S and 50S subunits, it traverses the body of the 30S subunit contacting proteins on the other side and probably holding the rRNA structure together. The combined cluster of proteins S8, S12 and S17 appears to hold together the shoulder and platform of the 30S subunit. This chain is Small ribosomal subunit protein uS12, found in Staphylococcus aureus (strain Mu3 / ATCC 700698).